The chain runs to 1137 residues: DENN domain-containing protein 2B (1137 aa).

Over residues 1–12 the composition is skewed to polar residues; sequence MTMTANKNSSIT. Residues 1–99 form a disordered region; the sequence is MTMTANKNSS…PTCPFKTASF (99 aa). Phosphoserine occurs at positions 30 and 32. Pro residues predominate over residues 32–43; sequence SPPPVLSPPRSP. Over residues 49–64 the composition is skewed to polar residues; sequence DSETSACRYPSHSSSR. The segment covering 73-92 has biased composition (pro residues); the sequence is PAPSPQNPQDPSPDTSPPTC. T231 is modified (phosphothreonine). At S233 the chain carries Phosphoserine. The tract at residues 293-573 is disordered; sequence KEQPGRGLPQ…HRLPRLPKRH (281 aa). Positions 324-348 are enriched in low complexity; sequence EEPAGGASVSAGSRAVGVAGVAGEA. The residue at position 364 (T364) is a Phosphothreonine. The residue at position 368 (S368) is a Phosphoserine. The span at 368 to 380 shows a compositional bias: low complexity; sequence SPSSQRLPSKSSL. Over residues 392 to 402 the composition is skewed to basic and acidic residues; the sequence is RTFEYEADKNP. The segment at 401–447 is interaction with ABL1; the sequence is NPKSKPSNGLPPSPTPAAPPPLPSTPAPPVTRRPKKDMRGHRKSQSR. Residues 409–431 are compositionally biased toward pro residues; it reads GLPPSPTPAAPPPLPSTPAPPVT. The segment covering 432–446 has biased composition (basic residues); the sequence is RRPKKDMRGHRKSQS. Residues 456-481 are compositionally biased toward polar residues; the sequence is SSLQSLYPSSPTENGTENQPKFGSKS. Position 482 is a phosphothreonine (T482). A compositionally biased stretch (basic and acidic residues) spans 495–508; that stretch reads LPKENPYEDVDLKS. Composition is skewed to polar residues over residues 514-524 and 539-558; these read KSQQLSENSLD and SPPTQLSLKPNSQSLRSGNW. S545 is modified (phosphoserine). Residues 562–573 show a composition bias toward basic residues; that stretch reads KSHRLPRLPKRH. Residues S574 and S622 each carry the phosphoserine modification. Residues 641-661 are disordered; it reads IETASLRDENSESESDSDDRF. The uDENN domain occupies 698–846; that stretch reads EYFVVVSLKK…PFPAPGKTIK (149 aa). The region spanning 868 to 1001 is the cDENN domain; it reads RLEHVDFECL…LQAALEQALE (134 aa). The dDENN domain occupies 1003–1096; that stretch reads KNELISQDSD…QDRELRKCRA (94 aa).

Interacts with ITSN1 and GRB2. Isoform 1 interacts with the SH3 domain of ABL1. Phosphorylated. Phosphorylation decreases ITSN1 binding. In terms of tissue distribution, widely expressed with the exception of peripheral blood lymphocytes. Isoform 1 is expressed in several epithelial and fibroblast (including tumorigenic) but absent in lymphoid cell lines (at protein level). Isoform 3 is expressed in primary cell or weakly tumorigenic but not in tumorigenic cell lines (at protein level).

Its subcellular location is the cytoplasm. It is found in the cell cortex. The protein localises to the cell membrane. The protein resides in the recycling endosome. Its function is as follows. May be involved in cytoskeletal organization and tumorogenicity. Seems to be involved in a signaling transduction pathway leading to activation of MAPK1/ERK2. Plays a role in EGFR trafficking from recycling endosomes back to the cell membrane. In terms of biological role, guanine nucleotide exchange factor (GEF) which may activate RAB9A and RAB9B. Promotes the exchange of GDP to GTP, converting inactive GDP-bound Rab proteins into their active GTP-bound form. Functionally, may block ERK2 activation stimulated by ABL1. May alter cell morphology and cell growth. The chain is DENN domain-containing protein 2B from Homo sapiens (Human).